The following is a 320-amino-acid chain: Beta-ketoacyl-[acyl-carrier-protein] synthase III (320 aa).

Residues Cys114 and His247 contribute to the active site. The segment at 248 to 252 (QANRR) is ACP-binding. Asn277 is a catalytic residue.

This sequence belongs to the thiolase-like superfamily. FabH family. As to quaternary structure, homodimer.

It localises to the cytoplasm. The enzyme catalyses malonyl-[ACP] + acetyl-CoA + H(+) = 3-oxobutanoyl-[ACP] + CO2 + CoA. The protein operates within lipid metabolism; fatty acid biosynthesis. Its function is as follows. Catalyzes the condensation reaction of fatty acid synthesis by the addition to an acyl acceptor of two carbons from malonyl-ACP. Catalyzes the first condensation reaction which initiates fatty acid synthesis and may therefore play a role in governing the total rate of fatty acid production. Possesses both acetoacetyl-ACP synthase and acetyl transacylase activities. Its substrate specificity determines the biosynthesis of branched-chain and/or straight-chain of fatty acids. The chain is Beta-ketoacyl-[acyl-carrier-protein] synthase III from Neisseria meningitidis serogroup A / serotype 4A (strain DSM 15465 / Z2491).